A 48-amino-acid polypeptide reads, in one-letter code: Phosphatidylserine decarboxylase proenzyme (48 aa).

It belongs to the phosphatidylserine decarboxylase family. Type 1 subfamily. The cofactor is pyruvate.

It carries out the reaction a 1,2-diacyl-sn-glycero-3-phospho-L-serine + H(+) = a 1,2-diacyl-sn-glycero-3-phosphoethanolamine + CO2. It functions in the pathway phospholipid metabolism; phosphatidylethanolamine biosynthesis; phosphatidylethanolamine from CDP-diacylglycerol: step 2/2. The sequence is that of Phosphatidylserine decarboxylase proenzyme (psd) from Azotobacter vinelandii.